The following is a 323-amino-acid chain: Aldo-keto reductase family 1 member C3 (323 aa).

NADP(+) contacts are provided by residues Gly20 to Tyr24 and Asp50. The active-site Proton donor is Tyr55. Substrate is bound at residue His117. NADP(+)-binding positions include Ser166–Asn167, Gln190, Tyr216–Ser221, and Lys270–Asn280.

The protein belongs to the aldo/keto reductase family.

It is found in the cytoplasm. The catalysed reaction is a 3alpha-hydroxysteroid + NADP(+) = a 3-oxosteroid + NADPH + H(+). The enzyme catalyses a 3alpha-hydroxysteroid + NAD(+) = a 3-oxosteroid + NADH + H(+). It catalyses the reaction prostaglandin F2alpha + NADP(+) = prostaglandin D2 + NADPH + H(+). It carries out the reaction testosterone + NAD(+) = androst-4-ene-3,17-dione + NADH + H(+). The catalysed reaction is testosterone + NADP(+) = androst-4-ene-3,17-dione + NADPH + H(+). The enzyme catalyses prostaglandin F2alpha + NADP(+) = prostaglandin H2 + NADPH + H(+). It catalyses the reaction prostaglandin D2 + NADPH + H(+) = 11beta-prostaglandin F2 + NADP(+). It carries out the reaction prostaglandin D2-ethanolamide + NADPH + H(+) = 11beta-prostaglandin F2-ethanolamide + NADP(+). The catalysed reaction is 17beta-estradiol + NADP(+) = estrone + NADPH + H(+). The enzyme catalyses 17beta-estradiol + NAD(+) = estrone + NADH + H(+). It catalyses the reaction (20S)-hydroxypregn-4-en-3-one + NADP(+) = progesterone + NADPH + H(+). It carries out the reaction (20S)-hydroxypregn-4-en-3-one + NAD(+) = progesterone + NADH + H(+). The catalysed reaction is 5alpha-androstane-3alpha,17beta-diol + NADP(+) = 17beta-hydroxy-5alpha-androstan-3-one + NADPH + H(+). The enzyme catalyses 5alpha-androstane-3alpha,17beta-diol + NAD(+) = 17beta-hydroxy-5alpha-androstan-3-one + NADH + H(+). It catalyses the reaction androsterone + NADPH + H(+) = 5alpha-androstane-3alpha,17beta-diol + NADP(+). It carries out the reaction 5alpha-androstane-3alpha,17beta-diol + NAD(+) = androsterone + NADH + H(+). The catalysed reaction is 5alpha-androstane-3beta,17beta-diol + NADP(+) = 17beta-hydroxy-5alpha-androstan-3-one + NADPH + H(+). The enzyme catalyses 9-cis-retinol + NADP(+) = 9-cis-retinal + NADPH + H(+). The protein operates within steroid metabolism. Its function is as follows. Cytosolic aldo-keto reductase that catalyzes the NADH and NADPH-dependent reduction of ketosteroids to hydroxysteroids. Acts as a NAD(P)(H)-dependent 3-, 17- and 20-ketosteroid reductase on the steroid nucleus and side chain and regulates the metabolism of androgens, estrogens and progesterone. Displays the ability to catalyze both oxidation and reduction in vitro, but most probably acts as a reductase in vivo since the oxidase activity measured in vitro is inhibited by physiological concentration of NADPH. Acts preferentially as a 17-ketosteroid reductase and has the highest catalytic efficiency of the AKR1C enzyme for the reduction of delta4-androstenedione to form testosterone. Reduces prostaglandin (PG) D2 to 11beta-prostaglandin F2, progesterone to 20alpha-hydroxyprogesterone and estrone to 17beta-estradiol. Catalyzes the transformation of the potent androgen dihydrotestosterone (DHT) into the less active form, 5-alpha-androstan-3-alpha,17-beta-diol (3-alpha-diol). Also displays retinaldehyde reductase activity toward 9-cis-retinal. The chain is Aldo-keto reductase family 1 member C3 (AKR1C3) from Pongo abelii (Sumatran orangutan).